A 654-amino-acid chain; its full sequence is Acetyl-coenzyme A synthetase (654 aa).

CoA-binding positions include 196-199 and threonine 316; that span reads RGGK. ATP is bound by residues 392–394, 416–421, aspartate 506, and arginine 521; these read GEP and DTWWQT. Serine 529 serves as a coordination point for CoA. ATP is bound at residue arginine 532. Residues valine 543 and valine 548 each contribute to the Mg(2+) site. Lysine 618 bears the N6-acetyllysine mark.

The protein belongs to the ATP-dependent AMP-binding enzyme family. Mg(2+) is required as a cofactor. Acetylated. Deacetylation by the SIR2-homolog deacetylase activates the enzyme.

It catalyses the reaction acetate + ATP + CoA = acetyl-CoA + AMP + diphosphate. Functionally, catalyzes the conversion of acetate into acetyl-CoA (AcCoA), an essential intermediate at the junction of anabolic and catabolic pathways. AcsA undergoes a two-step reaction. In the first half reaction, AcsA combines acetate with ATP to form acetyl-adenylate (AcAMP) intermediate. In the second half reaction, it can then transfer the acetyl group from AcAMP to the sulfhydryl group of CoA, forming the product AcCoA. In Methylobacillus flagellatus (strain ATCC 51484 / DSM 6875 / VKM B-1610 / KT), this protein is Acetyl-coenzyme A synthetase.